We begin with the raw amino-acid sequence, 1390 residues long: DNA-directed RNA polymerase subunit beta' (1390 aa).

Zn(2+)-binding residues include C73, C75, C88, and C91. 3 residues coordinate Mg(2+): D464, D466, and D468. 4 residues coordinate Zn(2+): C810, C884, C891, and C894. The tract at residues 1365–1390 is disordered; the sequence is EKKEQKIYGNGEEPAKEQKWIPQAGT.

Belongs to the RNA polymerase beta' chain family. As to quaternary structure, the RNAP catalytic core consists of 2 alpha, 1 beta, 1 beta' and 1 omega subunit. When a sigma factor is associated with the core the holoenzyme is formed, which can initiate transcription. Mg(2+) is required as a cofactor. Zn(2+) serves as cofactor.

It catalyses the reaction RNA(n) + a ribonucleoside 5'-triphosphate = RNA(n+1) + diphosphate. Its function is as follows. DNA-dependent RNA polymerase catalyzes the transcription of DNA into RNA using the four ribonucleoside triphosphates as substrates. The chain is DNA-directed RNA polymerase subunit beta' from Methylacidiphilum infernorum (isolate V4) (Methylokorus infernorum (strain V4)).